We begin with the raw amino-acid sequence, 342 residues long: Succinylglutamate desuccinylase (342 aa).

Residues His63, Glu66, and His155 each coordinate Zn(2+). The active site involves Glu219.

It belongs to the AspA/AstE family. Succinylglutamate desuccinylase subfamily. Zn(2+) is required as a cofactor.

It catalyses the reaction N-succinyl-L-glutamate + H2O = L-glutamate + succinate. Its pathway is amino-acid degradation; L-arginine degradation via AST pathway; L-glutamate and succinate from L-arginine: step 5/5. Its function is as follows. Transforms N(2)-succinylglutamate into succinate and glutamate. The chain is Succinylglutamate desuccinylase from Vibrio cholerae serotype O1 (strain ATCC 39541 / Classical Ogawa 395 / O395).